Consider the following 90-residue polypeptide: Large ribosomal subunit protein bL27 (90 aa).

The segment at 1 to 21 (MASKKAGGSTRNGRDSEAKRL) is disordered.

The protein belongs to the bacterial ribosomal protein bL27 family.

The chain is Large ribosomal subunit protein bL27 from Neisseria gonorrhoeae (strain ATCC 700825 / FA 1090).